The sequence spans 103 residues: Large ribosomal subunit protein bL21 (103 aa).

The protein belongs to the bacterial ribosomal protein bL21 family. Part of the 50S ribosomal subunit. Contacts protein L20.

This protein binds to 23S rRNA in the presence of protein L20. This is Large ribosomal subunit protein bL21 from Bordetella avium (strain 197N).